We begin with the raw amino-acid sequence, 106 residues long: Protein aveugle (106 aa).

Residues 26–91 (WTVSDVLKWY…WREIVKQRLK (66 aa)) form the SAM domain.

Interacts with the SAM domain of cnk.

It localises to the cytoplasm. The protein localises to the membrane. Required for normal photoreceptor differentiation between Ras and Raf for EGFR signaling in the eye and for mitogen-activated protein kinase phosphorylation. Probably acts together with Cnk to promote Raf activation, perhaps by recruiting an activating kinase. The protein is Protein aveugle (ave) of Drosophila melanogaster (Fruit fly).